We begin with the raw amino-acid sequence, 573 residues long: Urease subunit alpha (573 aa).

Residues 136 to 573 (GAIDCHVHLI…LPMAQRYFLF (438 aa)) form the Urease domain. His141, His143, and Lys224 together coordinate Ni(2+). Lys224 is modified (N6-carboxylysine). His226 lines the substrate pocket. His253 and His279 together coordinate Ni(2+). The active-site Proton donor is the His327. Asp367 serves as a coordination point for Ni(2+).

This sequence belongs to the metallo-dependent hydrolases superfamily. Urease alpha subunit family. Heterotrimer of UreA (gamma), UreB (beta) and UreC (alpha) subunits. Three heterotrimers associate to form the active enzyme. The cofactor is Ni cation. In terms of processing, carboxylation allows a single lysine to coordinate two nickel ions.

It is found in the cytoplasm. The enzyme catalyses urea + 2 H2O + H(+) = hydrogencarbonate + 2 NH4(+). It participates in nitrogen metabolism; urea degradation; CO(2) and NH(3) from urea (urease route): step 1/1. In Mycobacterium sp. (strain JLS), this protein is Urease subunit alpha.